We begin with the raw amino-acid sequence, 533 residues long: ATP synthase F(1) complex catalytic subunit beta, mitochondrial (533 aa).

Residues 1 to 53 constitute a mitochondrion transit peptide; that stretch reads MLGLAGRCSAAAASAARPALRRAAGPSHGFLPLLLSRGAGPAAAVGARRDHAA. Positions 214, 215, 216, 217, 218, and 219 each coordinate ADP. Glycine 214 contacts ATP. Residues glycine 214, valine 215, glycine 216, lysine 217, and threonine 218 each contribute to the phosphate site. 4 residues coordinate ATP: glycine 216, lysine 217, threonine 218, and valine 219. Position 218 (threonine 218) interacts with Mg(2+). Glutamate 243 contributes to the Mg(2+) binding site. Arginine 244 is an ATP binding site.

In terms of assembly, homotrimer. Component of the ATP synthase complex composed at least of ATP5F1A/subunit alpha, ATP5F1B/subunit beta, ATP5MC1/subunit c (homooctomer), MT-ATP6/subunit a, MT-ATP8/subunit 8, ATP5ME/subunit e, ATP5MF/subunit f, ATP5MG/subunit g, ATP5MK/subunit k, ATP5MJ/subunit j, ATP5F1C/subunit gamma, ATP5F1D/subunit delta, ATP5F1E/subunit epsilon, ATP5PF/subunit F6, ATP5PB/subunit b, ATP5PD/subunit d, ATP5PO/subunit OSCP. ATP synthase complex consists of a soluble F(1) head domain (subunits alpha(3) and beta(3)) - the catalytic core - and a membrane F(0) domain - the membrane proton channel (subunits c, a, 8, e, f, g, k and j). These two domains are linked by a central stalk (subunits gamma, delta, and epsilon) rotating inside the F1 region and a stationary peripheral stalk (subunits F6, b, d, and OSCP).

It localises to the mitochondrion inner membrane. The enzyme catalyses ATP + H2O + 4 H(+)(in) = ADP + phosphate + 5 H(+)(out). Its function is as follows. Catalytic subunit beta, of the mitochondrial membrane ATP synthase complex (F(1)F(0) ATP synthase or Complex V) that produces ATP from ADP in the presence of a proton gradient across the membrane which is generated by electron transport complexes of the respiratory chain. ATP synthase complex consist of a soluble F(1) head domain - the catalytic core - and a membrane F(1) domain - the membrane proton channel. These two domains are linked by a central stalk rotating inside the F(1) region and a stationary peripheral stalk. During catalysis, ATP synthesis in the catalytic domain of F(1) is coupled via a rotary mechanism of the central stalk subunits to proton translocation. In vivo, can only synthesize ATP although its ATP hydrolase activity can be activated artificially in vitro. With the subunit alpha (ATP5F1A), forms the catalytic core in the F(1) domain. This Gallus gallus (Chicken) protein is ATP synthase F(1) complex catalytic subunit beta, mitochondrial.